We begin with the raw amino-acid sequence, 698 residues long: Interleukin-17 receptor C (698 aa).

An N-terminal signal peptide occupies residues 1–21 (MPVSWFLLSLALGRNPVVVSL). The Extracellular segment spans residues 22-464 (ERLMEPQDTA…CPMDKYIHRR (443 aa)). N-linked (GlcNAc...) asparagine glycosylation is present at Asn182. Cys190 and Cys202 are oxidised to a cystine. Asn209, Asn249, Asn255, and Asn259 each carry an N-linked (GlcNAc...) asparagine glycan. Cystine bridges form between Cys266–Cys316, Cys268–Cys284, Cys325–Cys334, Cys364–Cys378, Cys406–Cys413, and Cys440–Cys455. The chain crosses the membrane as a helical span at residues 465–485 (WVLVWLACLLLAAALFFFLLL). At 486 to 698 (KKDRRKAARG…WDLGPCTTLE (213 aa)) the chain is on the cytoplasmic side. One can recognise an SEFIR domain in the interval 496–645 (SRTALLLHSA…LPSQLPAFLD (150 aa)).

In terms of assembly, homodimer; disulfide-linked. Heterodimer with IL17RA. Heterodimerization with IL17RA is independent of the cytoplasmic tail. Associates with non-glycosylated IL17RA constitutively. Binding of IL17A and IL17F induces association with glycosylated IL17RA. Forms complexes with 2:1 binding stoichiometry: two receptor chains for one interleukin molecule. IL17A homodimer preferentially drives the formation of IL17RA-IL17RC heterodimeric receptor complex, whereas IL17F homodimer forms predominantly complexes with IL17RC homodimer. IL17A-IL17F forms complexes with IL17RA-IL17RC, but with lower affinity when compared to IL17A homodimer. IL17RC chain cannot distinguish between IL17A and IL17F molecules, potentially enabling the formation of topologically distinct complexes. Interacts (through SEFIR domain and extended downstream region) with TRAF3IP2/ACT1 (phosphorylated). As to expression, highly expressed in colonic epithelial cells. Expressed in lung epithelial cells. Expressed in macrophages. Highly expressed in B-1a B cells and at a lower extent in B-1b and B-2 B cells (at protein level).

It localises to the cell membrane. Functionally, receptor for IL17A and IL17F, major effector cytokines of innate and adaptive immune system involved in antimicrobial host defense and maintenance of tissue integrity. Receptor for IL17A and IL17F homodimers as part of a heterodimeric complex with IL17RA. Receptor for the heterodimer formed by IL17A and IL17B as part of a heterodimeric complex with IL17RA. Has also been shown to be the cognate receptor for IL17F and to bind IL17A with high affinity without the need for IL17RA. Upon binding of IL17F homodimer triggers downstream activation of TRAF6 and NF-kappa-B signaling pathway. Induces transcriptional activation of IL33, a potent cytokine that stimulates group 2 innate lymphoid cells and adaptive T-helper 2 cells involved in pulmonary allergic response to fungi. Promotes sympathetic innervation of peripheral organs by coordinating the communication between gamma-delta T cells and parenchymal cells. Stimulates sympathetic innervation of thermogenic adipose tissue by driving TGFB1 expression. Binding of IL17A-IL17F to IL17RA-IL17RC heterodimeric receptor complex triggers homotypic interaction of IL17RA and IL17RC chains with TRAF3IP2 adapter through SEFIR domains. This leads to downstream TRAF6-mediated activation of NF-kappa-B and MAPkinase pathways ultimately resulting in transcriptional activation of cytokines, chemokines, antimicrobial peptides and matrix metalloproteinases, with potential strong immune inflammation. Primarily induces neutrophil activation and recruitment at infection and inflammatory sites. Stimulates the production of antimicrobial beta-defensins DEFB1, DEFB103A, and DEFB104A by mucosal epithelial cells, limiting the entry of microbes through the epithelial barriers. In Mus musculus (Mouse), this protein is Interleukin-17 receptor C (Il17rc).